The primary structure comprises 293 residues: Homoserine kinase (293 aa).

84–94 contributes to the ATP binding site; the sequence is PFSRGLGSSSS.

It belongs to the GHMP kinase family. Homoserine kinase subfamily.

Its subcellular location is the cytoplasm. The enzyme catalyses L-homoserine + ATP = O-phospho-L-homoserine + ADP + H(+). It functions in the pathway amino-acid biosynthesis; L-threonine biosynthesis; L-threonine from L-aspartate: step 4/5. In terms of biological role, catalyzes the ATP-dependent phosphorylation of L-homoserine to L-homoserine phosphate. This Campylobacter fetus subsp. fetus (strain 82-40) protein is Homoserine kinase.